A 393-amino-acid chain; its full sequence is Formate-dependent phosphoribosylglycinamide formyltransferase (393 aa).

N(1)-(5-phospho-beta-D-ribosyl)glycinamide contacts are provided by residues Glu-17–Leu-18 and Glu-77. Residues Arg-109, Lys-150, Ser-155–Gln-160, Glu-190–Leu-193, and Glu-198 contribute to the ATP site. Residues Asp-114–Leu-304 enclose the ATP-grasp domain. Mg(2+) is bound by residues Glu-263 and Glu-275. Residues Asp-282, Lys-354, and Arg-361–Arg-362 each bind N(1)-(5-phospho-beta-D-ribosyl)glycinamide.

It belongs to the PurK/PurT family. Homodimer.

The catalysed reaction is N(1)-(5-phospho-beta-D-ribosyl)glycinamide + formate + ATP = N(2)-formyl-N(1)-(5-phospho-beta-D-ribosyl)glycinamide + ADP + phosphate + H(+). It participates in purine metabolism; IMP biosynthesis via de novo pathway; N(2)-formyl-N(1)-(5-phospho-D-ribosyl)glycinamide from N(1)-(5-phospho-D-ribosyl)glycinamide (formate route): step 1/1. In terms of biological role, involved in the de novo purine biosynthesis. Catalyzes the transfer of formate to 5-phospho-ribosyl-glycinamide (GAR), producing 5-phospho-ribosyl-N-formylglycinamide (FGAR). Formate is provided by PurU via hydrolysis of 10-formyl-tetrahydrofolate. This chain is Formate-dependent phosphoribosylglycinamide formyltransferase, found in Synechococcus sp. (strain RCC307).